Here is a 201-residue protein sequence, read N- to C-terminus: Ras-related protein Rab-1B (201 aa).

M1 is subject to N-acetylmethionine. The GTP site is built by S17, G18, V19, G20, K21, S22, C23, Y33, T34, E35, S36, S39, and T40. S22 is a binding site for Mg(2+). Residues 30–45 (DDTYTESYISTIGVDF) carry the Switch 1 motif. Mg(2+) is bound by residues T40 and D63. The tract at residues 64–83 (TAGQERFRTITSSYYRGAHG) is switch 2 region; Required for interaction with REP1/CHM. The short motif at 65–80 (AGQERFRTITSSYYRG) is the Switch 2 element. GTP-binding residues include G66, N121, K122, D124, S151, A152, and K153. The interval 173–201 (MGPGAASGGERPNLKIDSTPVKQAGGGCC) is disordered. S-geranylgeranyl cysteine attachment occurs at residues C200 and C201. Position 201 is a cysteine methyl ester (C201).

It belongs to the small GTPase superfamily. Rab family. Interacts with MICAL1 and MICAL2. Interacts (in GTP-bound form) with MICALCL, MICAL1 and MILCAL3. Interacts with GDI1; the interaction requires the GDP-bound state. Interacts with CHM/REP1; the interaction requires the GDP-bound form and is necessary for prenylation by GGTase II. Interacts with RabGAP TBC1D20. Interacts (in GDP-bound form) with lipid phosphatase MTMR6 (via GRAM domain); the interaction regulates MTMR6 recruitment to the endoplasmic reticulum-Golgi intermediate compartment. Interacts (in GDP-bound form) with lipid phosphatase MTMR7. Mg(2+) is required as a cofactor. Prenylated; by GGTase II, only after interaction of the substrate with Rab escort protein 1 (REP1).

The protein localises to the cytoplasm. The protein resides in the membrane. It localises to the preautophagosomal structure membrane. Its subcellular location is the perinuclear region. It carries out the reaction GTP + H2O = GDP + phosphate + H(+). With respect to regulation, regulated by guanine nucleotide exchange factors (GEFs) which promote the exchange of bound GDP for free GTP. Regulated by GTPase activating proteins (GAPs) including TBC1D20 which increases the GTP hydrolysis activity. Inhibited by GDP dissociation inhibitors (GDIs). Its function is as follows. The small GTPases Rab are key regulators of intracellular membrane trafficking, from the formation of transport vesicles to their fusion with membranes. Rabs cycle between an inactive GDP-bound form and an active GTP-bound form that is able to recruit to membranes different set of downstream effectors directly responsible for vesicle formation, movement, tethering and fusion. Plays a role in the initial events of the autophagic vacuole development which take place at specialized regions of the endoplasmic reticulum. Regulates vesicular transport between the endoplasmic reticulum and successive Golgi compartments. Required to modulate the compacted morphology of the Golgi. Promotes the recruitment of lipid phosphatase MTMR6 to the endoplasmic reticulum-Golgi intermediate compartment. This chain is Ras-related protein Rab-1B (RAB1B), found in Bos taurus (Bovine).